The chain runs to 477 residues: Solute carrier family 2, facilitated glucose transporter member 8 (477 aa).

Residues 1–25 lie on the Cytoplasmic side of the membrane; sequence MSPEDPQETQPLLRPPEARTPRGRR. Positions 12 to 13 match the Dileucine internalization motif motif; sequence LL. A helical membrane pass occupies residues 26–46; it reads VFLASFAAALGPLSFGFALGY. The Extracellular segment spans residues 47-70; the sequence is SSPAIPSLRRTAPPALRLGDNAAS. The chain crosses the membrane as a helical span at residues 71 to 91; it reads WFGAVVTLGAAAGGILGGWLL. Over 92-96 the chain is Cytoplasmic; sequence DRAGR. The chain crosses the membrane as a helical span at residues 97–117; that stretch reads KLSLLLCTVPFVTGFAVITAA. Over 118-127 the chain is Extracellular; the sequence is RDVWMLLGGR. A helical transmembrane segment spans residues 128–148; that stretch reads LLTGLACGVASLVAPVYISEI. The Cytoplasmic portion of the chain corresponds to 149–156; sequence AYPAVRGL. Residues 157-177 traverse the membrane as a helical segment; it reads LGSCVQLMVVTGILLAYVAGW. Glutamine 162 provides a ligand contact to D-glucose. The Extracellular segment spans residues 178–182; that stretch reads VLEWR. Residues 183-203 traverse the membrane as a helical segment; that stretch reads WLAVLGCVPPTLMLLLMCYMP. Topologically, residues 204-257 are cytoplasmic; it reads ETPRFLLTQHQYQEAMAALRFLWGSEEGWEEPPVGAEHQGFQLALLRRPGIYKP. The helical transmembrane segment at 258 to 278 threads the bilayer; sequence LIIGISLMVFQQLSGVNAIMF. D-glucose contacts are provided by residues 268-269 and asparagine 274; that span reads QQ. The Extracellular portion of the chain corresponds to 279-293; it reads YANSIFEEAKFKDSS. Residues 294–314 form a helical membrane-spanning segment; it reads LASVTVGIIQVLFTAVAALIM. Topologically, residues 315–320 are cytoplasmic; it reads DRAGRR. A helical transmembrane segment spans residues 321–341; it reads LLLALSGVIMVFSMSAFGTYF. The Extracellular segment spans residues 342-367; the sequence is KLTQSLPSNSSHVGLVPIAAEPVDVQ. The N-linked (GlcNAc...) asparagine glycan is linked to asparagine 350. The chain crosses the membrane as a helical span at residues 368–388; that stretch reads VGLAWLAVGSMCLFIAGFAVG. Residues 389 to 404 are Cytoplasmic-facing; it reads WGPIPWLLMSEIFPLH. Tryptophan 394 serves as a coordination point for D-glucose. The helical transmembrane segment at 405 to 425 threads the bilayer; the sequence is VKGVATGICVLTNWFMAFLVT. Topologically, residues 426 to 438 are extracellular; it reads KEFSSVMEMLRPY. Residues 439 to 459 traverse the membrane as a helical segment; it reads GAFWLTAAFCALSVLFTLTVV. Topologically, residues 460–477 are cytoplasmic; the sequence is PETKGRTLEQVTAHFEGR.

It belongs to the major facilitator superfamily. Sugar transporter (TC 2.A.1.1) family. Glucose transporter subfamily. As to quaternary structure, interacts with AP2B1. Also able to mediate the transport of dehydroascorbate. As to expression, highest level of expression in placenta and testis. Highly expressed in adult and pubertal testis, but not prepubertal testis. Lower levels of expression in brain, liver, heart, kidney, fat and skeletal muscle.

It localises to the cell membrane. It is found in the cytoplasmic vesicle membrane. The catalysed reaction is D-glucose(out) = D-glucose(in). It catalyses the reaction D-fructose(out) = D-fructose(in). It carries out the reaction L-dehydroascorbate(out) = L-dehydroascorbate(in). The enzyme catalyses alpha,alpha-trehalose(in) = alpha,alpha-trehalose(out). Inhibited by cytochalasin B. Functionally, insulin-regulated facilitative hexose transporter that mediates the transport of glucose and fructose. Facilitates hepatic influx of dietary trehalose, which in turn inhibits glucose and fructose influx triggering a starvation signal and hepatic autophagy through activation of AMPK and ULK1. Also able to mediate the transport of dehydroascorbate. The sequence is that of Solute carrier family 2, facilitated glucose transporter member 8 from Mus musculus (Mouse).